Here is a 911-residue protein sequence, read N- to C-terminus: Valine--tRNA ligase (911 aa).

The short motif at Pro57–His67 is the 'HIGH' region element. Residues Lys599–Ser603 carry the 'KMSKS' region motif. Residue Lys602 participates in ATP binding. A disordered region spans residues Glu882–His911.

The protein belongs to the class-I aminoacyl-tRNA synthetase family. ValS type 2 subfamily. In terms of assembly, monomer.

Its subcellular location is the cytoplasm. The catalysed reaction is tRNA(Val) + L-valine + ATP = L-valyl-tRNA(Val) + AMP + diphosphate. Its function is as follows. Catalyzes the attachment of valine to tRNA(Val). As ValRS can inadvertently accommodate and process structurally similar amino acids such as threonine, to avoid such errors, it has a 'posttransfer' editing activity that hydrolyzes mischarged Thr-tRNA(Val) in a tRNA-dependent manner. The sequence is that of Valine--tRNA ligase from Bifidobacterium longum (strain DJO10A).